A 125-amino-acid polypeptide reads, in one-letter code: Secretion system apparatus protein SsaO (125 aa).

This chain is Secretion system apparatus protein SsaO (ssaO), found in Salmonella typhimurium (strain LT2 / SGSC1412 / ATCC 700720).